The sequence spans 238 residues: Purine nucleoside phosphorylase DeoD-type (238 aa).

His5 is a binding site for a purine D-ribonucleoside. Phosphate is bound by residues Gly21, Arg25, Arg44, and 88–91; that span reads RVGS. A purine D-ribonucleoside contacts are provided by residues 180-182 and 204-205; these read EME and SD. Asp205 functions as the Proton donor in the catalytic mechanism.

Belongs to the PNP/UDP phosphorylase family. As to quaternary structure, homohexamer; trimer of homodimers.

The enzyme catalyses a purine D-ribonucleoside + phosphate = a purine nucleobase + alpha-D-ribose 1-phosphate. It carries out the reaction a purine 2'-deoxy-D-ribonucleoside + phosphate = a purine nucleobase + 2-deoxy-alpha-D-ribose 1-phosphate. Functionally, catalyzes the reversible phosphorolytic breakdown of the N-glycosidic bond in the beta-(deoxy)ribonucleoside molecules, with the formation of the corresponding free purine bases and pentose-1-phosphate. The sequence is that of Purine nucleoside phosphorylase DeoD-type from Proteus mirabilis (strain HI4320).